A 260-amino-acid polypeptide reads, in one-letter code: Snake venom serine protease homolog (260 aa).

A signal peptide spans 1 to 18 (MVLVRVLANLLMLQLSYA). Positions 19–24 (QKSSEL) are excised as a propeptide. A Peptidase S1 domain is found at 25 to 251 (IIGGDECNIN…HLNWIQSIIA (227 aa)). Intrachain disulfides connect C31-C165, C52-C68, C100-C258, C144-C212, C176-C191, and C202-C227. N123 and N124 each carry an N-linked (GlcNAc...) asparagine glycan. Residue N253 is glycosylated (N-linked (GlcNAc...) asparagine).

Belongs to the peptidase S1 family. Snake venom subfamily. Expressed by the venom gland.

Its subcellular location is the secreted. Functionally, snake venom serine protease homolog that may act in the hemostasis system of the prey. The chain is Snake venom serine protease homolog from Protobothrops jerdonii (Jerdon's pitviper).